A 108-amino-acid chain; its full sequence is Latartoxin-2c (108 aa).

A signal peptide spans 1 to 19 (MKVLVITALCFILLQNVLG). Residues 20–42 (EDTYEDLQNYIENLINENQDEAR) constitute a propeptide, removed in mature form. The Processing quadruplet motif signature appears at 39 to 42 (DEAR). 4 cysteine pairs are disulfide-bonded: Cys-44–Cys-61, Cys-51–Cys-72, Cys-60–Cys-84, and Cys-74–Cys-82. Ile-107 carries the isoleucine amide modification.

The protein belongs to the neurotoxin 19 (CSTX) family. 11 (latartoxin) subfamily. Post-translationally, contains 4 disulfide bonds. Cleavage of the propeptide depends on the processing quadruplet motif (XXXR, with at least one of X being E). As to expression, expressed by the venom gland.

The protein resides in the secreted. Functionally, insect toxin. This is Latartoxin-2c from Lachesana tarabaevi (Spider).